Reading from the N-terminus, the 214-residue chain is Large ribosomal subunit protein uL3 (214 aa).

A disordered region spans residues 133–153; that stretch reads GRATHGNSRSHNVPGSIGMAQ. The residue at position 153 (Q153) is an N5-methylglutamine.

This sequence belongs to the universal ribosomal protein uL3 family. In terms of assembly, part of the 50S ribosomal subunit. Forms a cluster with proteins L14 and L19. In terms of processing, methylated by PrmB.

Its function is as follows. One of the primary rRNA binding proteins, it binds directly near the 3'-end of the 23S rRNA, where it nucleates assembly of the 50S subunit. In Cupriavidus metallidurans (strain ATCC 43123 / DSM 2839 / NBRC 102507 / CH34) (Ralstonia metallidurans), this protein is Large ribosomal subunit protein uL3.